A 215-amino-acid chain; its full sequence is Small ribosomal subunit protein uS3 (215 aa).

Residues 38 to 107 (IRDYIKKTYH…KFQLNIEEVK (70 aa)) form the KH type-2 domain.

It belongs to the universal ribosomal protein uS3 family. In terms of assembly, part of the 30S ribosomal subunit. Forms a tight complex with proteins S10 and S14.

In terms of biological role, binds the lower part of the 30S subunit head. Binds mRNA in the 70S ribosome, positioning it for translation. In Kosmotoga olearia (strain ATCC BAA-1733 / DSM 21960 / TBF 19.5.1), this protein is Small ribosomal subunit protein uS3.